The following is a 36-amino-acid chain: Protein YmgL (36 aa).

The sequence is that of Protein YmgL from Escherichia coli (strain K12).